The sequence spans 40 residues: Photosystem II reaction center protein J (40 aa).

The chain crosses the membrane as a helical span at residues 8–28; the sequence is IPLWLVGTVTGTLVIGLMGIF.

The protein belongs to the PsbJ family. In terms of assembly, PSII is composed of 1 copy each of membrane proteins PsbA, PsbB, PsbC, PsbD, PsbE, PsbF, PsbH, PsbI, PsbJ, PsbK, PsbL, PsbM, PsbT, PsbX, PsbY, PsbZ, Psb30/Ycf12, at least 3 peripheral proteins of the oxygen-evolving complex and a large number of cofactors. It forms dimeric complexes.

It localises to the plastid. The protein resides in the chloroplast thylakoid membrane. Functionally, one of the components of the core complex of photosystem II (PSII). PSII is a light-driven water:plastoquinone oxidoreductase that uses light energy to abstract electrons from H(2)O, generating O(2) and a proton gradient subsequently used for ATP formation. It consists of a core antenna complex that captures photons, and an electron transfer chain that converts photonic excitation into a charge separation. This is Photosystem II reaction center protein J from Psilotum nudum (Whisk fern).